The primary structure comprises 198 residues: Transcriptional regulator GfcR (198 aa).

The protein belongs to the purine/pyrimidine phosphoribosyltransferase family. GfcR subfamily.

This chain is Transcriptional regulator GfcR, found in Methanosphaera stadtmanae (strain ATCC 43021 / DSM 3091 / JCM 11832 / MCB-3).